The chain runs to 203 residues: Probable Tat proofreading chaperone DmsD (203 aa).

Belongs to the TorD/DmsD family. DmsD subfamily.

Required for biogenesis/assembly of DMSO reductase, but not for the interaction of the DmsA signal peptide with the Tat system. May be part of a chaperone cascade complex that facilitates a folding-maturation pathway for the substrate protein. The chain is Probable Tat proofreading chaperone DmsD from Haemophilus influenzae (strain ATCC 51907 / DSM 11121 / KW20 / Rd).